The sequence spans 602 residues: Elongation factor 4 (602 aa).

In terms of domain architecture, tr-type G spans 7-188 (ENIRNFSIIA…SIIRLVPPPK (182 aa)). GTP contacts are provided by residues 19–24 (DHGKST) and 135–138 (NKID).

It belongs to the TRAFAC class translation factor GTPase superfamily. Classic translation factor GTPase family. LepA subfamily.

The protein localises to the cell inner membrane. The catalysed reaction is GTP + H2O = GDP + phosphate + H(+). Functionally, required for accurate and efficient protein synthesis under certain stress conditions. May act as a fidelity factor of the translation reaction, by catalyzing a one-codon backward translocation of tRNAs on improperly translocated ribosomes. Back-translocation proceeds from a post-translocation (POST) complex to a pre-translocation (PRE) complex, thus giving elongation factor G a second chance to translocate the tRNAs correctly. Binds to ribosomes in a GTP-dependent manner. The protein is Elongation factor 4 of Chlamydia trachomatis serovar A (strain ATCC VR-571B / DSM 19440 / HAR-13).